Reading from the N-terminus, the 362-residue chain is Melatonin receptor type 1B (362 aa).

Residues 1 to 42 (MSENGSFANCCEAGGWAVRPGWSGAGSARPSRTPRPPWVAPA) lie on the Extracellular side of the membrane. An N-linked (GlcNAc...) asparagine glycan is attached at N4. Residues 43–63 (LSAVLIVTTAVDVVGNLLVIL) form a helical membrane-spanning segment. The Cytoplasmic portion of the chain corresponds to 64–76 (SVLRNRKLRNAGN). A helical transmembrane segment spans residues 77-97 (LFLVSLALADLVVAFYPYPLI). Residues 98-115 (LVAIFYDGWALGEEHCKA) lie on the Extracellular side of the membrane. A disulfide bridge connects residues C113 and C190. Residues 116 to 136 (SAFVMGLSVIGSVFNITAIAI) traverse the membrane as a helical segment. Over 137–155 (NRYCYICHSMAYHRIYRRW) the chain is Cytoplasmic. The chain crosses the membrane as a helical span at residues 156 to 176 (HTPLHICLIWLLTVVALLPNF). Melatonin contacts are provided by N175 and Q194. Residues 177–200 (FVGSLEYDPRIYSCTFIQTASTQY) are Extracellular-facing. A helical transmembrane segment spans residues 201 to 221 (TAAVVVIHFLLPIAVVSFCYL). Residues 222-253 (RIWVLVLQARRKAKPESRLCLKPSDLRSFLTM) are Cytoplasmic-facing. Residues 254–274 (FVVFVIFAICWAPLNCIGLAV) form a helical membrane-spanning segment. The Extracellular portion of the chain corresponds to 275-287 (AINPQEMAPQIPE). The helical transmembrane segment at 288-308 (GLFVTSYLLAYFNSCLNAIVY) threads the bilayer. Residues 309 to 362 (GLLNQNFRREYKRILLALWNPRHCIQDASKGSHAEGLQSPAPPIIGVQHQADAL) lie on the Cytoplasmic side of the membrane.

This sequence belongs to the G-protein coupled receptor 1 family. As to quaternary structure, interacts with GPR61, GPR62 and GPR135. In terms of tissue distribution, expressed in retina and less in brain and hippocampus.

It localises to the cell membrane. Functionally, high affinity receptor for melatonin. Likely to mediate the reproductive and circadian actions of melatonin. The activity of this receptor is mediated by pertussis toxin sensitive G proteins that inhibit adenylate cyclase activity. This Homo sapiens (Human) protein is Melatonin receptor type 1B (MTNR1B).